The primary structure comprises 93 residues: Cell division topological specificity factor (93 aa).

The protein belongs to the MinE family.

Functionally, prevents the cell division inhibition by proteins MinC and MinD at internal division sites while permitting inhibition at polar sites. This ensures cell division at the proper site by restricting the formation of a division septum at the midpoint of the long axis of the cell. The chain is Cell division topological specificity factor from Halorhodospira halophila (strain DSM 244 / SL1) (Ectothiorhodospira halophila (strain DSM 244 / SL1)).